We begin with the raw amino-acid sequence, 396 residues long: Acetate kinase (396 aa).

Mg(2+) is bound at residue Asn8. Position 15 (Lys15) interacts with ATP. Residue Arg89 coordinates substrate. Asp146 serves as the catalytic Proton donor/acceptor. ATP-binding positions include 206-210 (HIGNG), 283-285 (DMR), and 331-335 (GVGEN). A Mg(2+)-binding site is contributed by Glu383.

This sequence belongs to the acetokinase family. As to quaternary structure, homodimer. Mg(2+) serves as cofactor. Requires Mn(2+) as cofactor.

The protein localises to the cytoplasm. It catalyses the reaction acetate + ATP = acetyl phosphate + ADP. It functions in the pathway metabolic intermediate biosynthesis; acetyl-CoA biosynthesis; acetyl-CoA from acetate: step 1/2. Catalyzes the formation of acetyl phosphate from acetate and ATP. Can also catalyze the reverse reaction. This chain is Acetate kinase, found in Streptococcus pneumoniae (strain 70585).